The chain runs to 77 residues: Small ribosomal subunit protein bS21 (77 aa).

This sequence belongs to the bacterial ribosomal protein bS21 family.

This is Small ribosomal subunit protein bS21 from Bartonella tribocorum (strain CIP 105476 / IBS 506).